A 160-amino-acid chain; its full sequence is Small ribosomal subunit protein uS9 (160 aa).

This sequence belongs to the universal ribosomal protein uS9 family.

This Cereibacter sphaeroides (strain ATCC 17029 / ATH 2.4.9) (Rhodobacter sphaeroides) protein is Small ribosomal subunit protein uS9.